The primary structure comprises 177 residues: Interleukin-1 receptor antagonist protein (177 aa).

A signal peptide spans 1–25; sequence MEIRRRSVRHLISLLLFLFYSETAC. A disulfide bond links Cys91 and Cys141. A glycan (N-linked (GlcNAc...) asparagine) is linked at Asn109.

It belongs to the IL-1 family.

The protein localises to the secreted. Its function is as follows. Anti-inflammatory antagonist of interleukin-1 family of proinflammatory cytokines such as interleukin-1beta/IL1B and interleukin-1alpha/IL1A. Protects from immune dysregulation and uncontrolled systemic inflammation triggered by IL1 for a range of innate stimulatory agents such as pathogens. The sequence is that of Interleukin-1 receptor antagonist protein (IL1RN) from Equus caballus (Horse).